Here is an 883-residue protein sequence, read N- to C-terminus: Kinesin-like protein 5 (883 aa).

One can recognise a Kinesin motor domain in the interval 6-390 (SITVTVRVRP…LKYANRAKNI (385 aa)). 144 to 151 (GATGCGKT) serves as a coordination point for ATP. Coiled-coil stretches lie at residues 396 to 435 (RNMISVDRHVSQYVKAIVELREQISELENRLAQIDLSSQS) and 563 to 588 (LQDEVDLLKSIIENQVLDAQNKVDEF). The interval 755–785 (VSPMLEDKPEPGLLIKSPLEKKQEVNSESTQ) is disordered.

The protein belongs to the TRAFAC class myosin-kinesin ATPase superfamily. Kinesin family. Kinesin II subfamily. As to quaternary structure, heterodimer with klp6.

It localises to the cytoplasm. Its subcellular location is the cytoskeleton. It is found in the chromosome. The protein resides in the centromere. The protein localises to the kinetochore. It localises to the spindle. Has a role in establishing metaphase during mitosis. Required for chromosome segregation where it generates tension during kinetochore capturing. The protein is Kinesin-like protein 5 (klp5) of Schizosaccharomyces pombe (strain 972 / ATCC 24843) (Fission yeast).